The following is a 500-amino-acid chain: Nucleolar and spindle-associated protein 1 (500 aa).

4 disordered regions span residues K48–K204, T241–S299, V319–E353, and E365–K500. A compositionally biased stretch (basic residues) spans T82–I92. Polar residues predominate over residues N113–T127. Residues S264–R274 show a composition bias toward low complexity. Over residues T276–K298 the composition is skewed to polar residues. The span at E323 to R332 shows a compositional bias: basic and acidic residues. Over residues I380–T392 the composition is skewed to polar residues. Positions P442–P451 are enriched in basic and acidic residues. Over residues D452–L469 the composition is skewed to polar residues.

The protein belongs to the NUSAP family. In terms of assembly, interacts with DNA, microtubules, ipo7, kpna2 and kpnb1. Microtubule stabilization is inhibited by ipo7 and kpna2, while microtubule bundling is inhibited by kpnb1. Active GTP-bound ran causes dissociation of ipo7 and kpnb1.

The protein localises to the cytoplasm. It is found in the nucleus. It localises to the cytoskeleton. The protein resides in the spindle. Microtubule-associated protein with the capacity to bundle and stabilize microtubules. May associate with chromosomes and promote the organization of meiotic or mitotic spindle microtubules around them. In Xenopus tropicalis (Western clawed frog), this protein is Nucleolar and spindle-associated protein 1 (nusap1).